Reading from the N-terminus, the 154-residue chain is Interleukin-2 (154 aa).

Residues 1–20 (MYKLQLLSCIALTLALVANS) form the signal peptide. T23 carries an O-linked (GalNAc...) threonine glycan. C78 and C126 are oxidised to a cystine.

It belongs to the IL-2 family.

Its subcellular location is the secreted. Its function is as follows. Cytokine produced by activated CD4-positive helper T-cells and to a lesser extend activated CD8-positive T-cells and natural killer (NK) cells that plays pivotal roles in the immune response and tolerance. Binds to a receptor complex composed of either the high-affinity trimeric IL-2R (IL2RA/CD25, IL2RB/CD122 and IL2RG/CD132) or the low-affinity dimeric IL-2R (IL2RB and IL2RG). Interaction with the receptor leads to oligomerization and conformation changes in the IL-2R subunits resulting in downstream signaling starting with phosphorylation of JAK1 and JAK3. In turn, JAK1 and JAK3 phosphorylate the receptor to form a docking site leading to the phosphorylation of several substrates including STAT5. This process leads to activation of several pathways including STAT, phosphoinositide-3-kinase/PI3K and mitogen-activated protein kinase/MAPK pathways. Functions as a T-cell growth factor and can increase NK-cell cytolytic activity as well. Promotes strong proliferation of activated B-cells and subsequently immunoglobulin production. Plays a pivotal role in regulating the adaptive immune system by controlling the survival and proliferation of regulatory T-cells, which are required for the maintenance of immune tolerance. Moreover, participates in the differentiation and homeostasis of effector T-cell subsets, including Th1, Th2, Th17 as well as memory CD8-positive T-cells. This Lama glama (Llama) protein is Interleukin-2 (IL2).